The primary structure comprises 412 residues: Serine hydroxymethyltransferase (412 aa).

Residues Leu-117 and 121-123 contribute to the (6S)-5,6,7,8-tetrahydrofolate site; that span reads GHL. An N6-(pyridoxal phosphate)lysine modification is found at Lys-226. 349–351 serves as a coordination point for (6S)-5,6,7,8-tetrahydrofolate; that stretch reads SPF.

It belongs to the SHMT family. In terms of assembly, homodimer. Pyridoxal 5'-phosphate serves as cofactor.

The protein localises to the cytoplasm. It catalyses the reaction (6R)-5,10-methylene-5,6,7,8-tetrahydrofolate + glycine + H2O = (6S)-5,6,7,8-tetrahydrofolate + L-serine. Its pathway is one-carbon metabolism; tetrahydrofolate interconversion. The protein operates within amino-acid biosynthesis; glycine biosynthesis; glycine from L-serine: step 1/1. In terms of biological role, catalyzes the reversible interconversion of serine and glycine with tetrahydrofolate (THF) serving as the one-carbon carrier. This reaction serves as the major source of one-carbon groups required for the biosynthesis of purines, thymidylate, methionine, and other important biomolecules. Also exhibits THF-independent aldolase activity toward beta-hydroxyamino acids, producing glycine and aldehydes, via a retro-aldol mechanism. In Lawsonia intracellularis (strain PHE/MN1-00), this protein is Serine hydroxymethyltransferase.